A 131-amino-acid chain; its full sequence is Profilin-1 (131 aa).

The cysteines at positions 13 and 115 are disulfide-linked. The Involved in PIP2 interaction motif lies at 81 to 97; it reads RVIRGKKGAGGITIKKT. T111 is modified (phosphothreonine).

The protein belongs to the profilin family. Occurs in many kinds of cells as a complex with monomeric actin in a 1:1 ratio.

Its subcellular location is the cytoplasm. It localises to the cytoskeleton. Binds to actin and affects the structure of the cytoskeleton. At high concentrations, profilin prevents the polymerization of actin, whereas it enhances it at low concentrations. By binding to PIP2, it inhibits the formation of IP3 and DG. The polypeptide is Profilin-1 (PRO1) (Phleum pratense (Common timothy)).